Here is a 189-residue protein sequence, read N- to C-terminus: MVPPKPALWALLLALLGTAPSRAYSPACSVPDVLRHYRAIIFEDLQAAVKWGGAGAEKTRPGSRHFHFIQKNLTRPGSSGRRGRPRASCGAQKEHSILLSISSLGRTLRGAVAGGRRGALERAAWTVAVRTEAVMRRHCRTLRQRSRRPKMRPARRRGGRRQLLLRALDAVATCWEKLFALRAPASRDS.

An N-terminal signal peptide occupies residues 1-23 (MVPPKPALWALLLALLGTAPSRA). N-linked (GlcNAc...) asparagine glycosylation is present at Asn-72.

This is an uncharacterized protein from Homo sapiens (Human).